A 549-amino-acid polypeptide reads, in one-letter code: MVQSELQLQPRAGRRADASNWGDFGSDKGGLGNTDIPPITPNSQRPPKLSNLTYDSPPDYLRTVSCPETCRVLFDYQPEAPDELALQKGDLVKVLRKTTEDKGWWEGECQGRRGVFPDNFVIPPPPIRKLIPRKIISRESAPIKETKKLMPKSSLPTVKKLAAAASAPGRAKTLSTPSGDSQKRPSRNSGFNGSCLNGGPRQPGRKGSRTQASQQHSASSQEDEQKSPGKGPSRSKTPTPEKTRLPDKVLAPETIPAPDKVSIPKDPVPKKAPDSDKIPATEDTTLDKAGTPESTLSGNKPAKDEALDLKMALHEDTAPALVKILTPEHMIFKKEPSRDNDQCQHLPQGGSTQRPESPAPSNNIQVPGEYSPPPDSSERSCCRVRQVNGSFPAQSKAEDVSAMEEANFLEEPLAKDERTLNKALPKKLPSERAGPQKQVLPQESAPTPQVPHTIQQMPVPEEAPTLHPLTPLTSPKSKNDRMDVLESLKEEVGLLRSRLELLELKLEQKMGDVWEELKTETLLSPEVQMMQRNRKSFKHAETQTETQTE.

Residues 1–56 form a disordered region; sequence MVQSELQLQPRAGRRADASNWGDFGSDKGGLGNTDIPPITPNSQRPPKLSNLTYDS. The span at 41–54 shows a compositional bias: polar residues; the sequence is PNSQRPPKLSNLTY. In terms of domain architecture, SH3 spans 65–126; the sequence is SCPETCRVLF…PDNFVIPPPP (62 aa). Disordered stretches follow at residues 142 to 303 and 332 to 479; these read PIKE…KPAK and FKKE…KSKN. The segment covering 211 to 220 has biased composition (low complexity); sequence QASQQHSASS. Composition is skewed to basic and acidic residues over residues 267–280 and 332–342; these read PVPK…KIPA and FKKEPSRDNDQ. Polar residues-rich tracts occupy residues 343–365 and 439–456; these read CQHL…NNIQ and VLPQ…TIQQ. The stretch at 482 to 510 forms a coiled coil; the sequence is MDVLESLKEEVGLLRSRLELLELKLEQKM. The disordered stretch occupies residues 528-549; that stretch reads QMMQRNRKSFKHAETQTETQTE.

The chain is SH3 domain-containing protein 21 (Sh3d21) from Mus musculus (Mouse).